The following is a 294-amino-acid chain: Pyridoxal 5'-phosphate synthase subunit PdxS (294 aa).

D24 is a binding site for D-ribose 5-phosphate. The active-site Schiff-base intermediate with D-ribose 5-phosphate is K81. G153 lines the D-ribose 5-phosphate pocket. R165 is a binding site for D-glyceraldehyde 3-phosphate. D-ribose 5-phosphate-binding positions include G214 and 235–236 (GS).

Belongs to the PdxS/SNZ family. As to quaternary structure, in the presence of PdxT, forms a dodecamer of heterodimers.

The enzyme catalyses aldehydo-D-ribose 5-phosphate + D-glyceraldehyde 3-phosphate + L-glutamine = pyridoxal 5'-phosphate + L-glutamate + phosphate + 3 H2O + H(+). It functions in the pathway cofactor biosynthesis; pyridoxal 5'-phosphate biosynthesis. Catalyzes the formation of pyridoxal 5'-phosphate from ribose 5-phosphate (RBP), glyceraldehyde 3-phosphate (G3P) and ammonia. The ammonia is provided by the PdxT subunit. Can also use ribulose 5-phosphate and dihydroxyacetone phosphate as substrates, resulting from enzyme-catalyzed isomerization of RBP and G3P, respectively. The chain is Pyridoxal 5'-phosphate synthase subunit PdxS from Bacillus velezensis (strain DSM 23117 / BGSC 10A6 / LMG 26770 / FZB42) (Bacillus amyloliquefaciens subsp. plantarum).